A 123-amino-acid chain; its full sequence is Large ribosomal subunit protein uL14 (123 aa).

It belongs to the universal ribosomal protein uL14 family. In terms of assembly, part of the 50S ribosomal subunit. Forms a cluster with proteins L3 and L19. In the 70S ribosome, L14 and L19 interact and together make contacts with the 16S rRNA in bridges B5 and B8.

In terms of biological role, binds to 23S rRNA. Forms part of two intersubunit bridges in the 70S ribosome. The polypeptide is Large ribosomal subunit protein uL14 (Histophilus somni (strain 129Pt) (Haemophilus somnus)).